The following is a 155-amino-acid chain: Deoxyuridine 5'-triphosphate nucleotidohydrolase (155 aa).

Residues 74-76, Asn87, and 91-93 each bind substrate; these read RSG and TID.

Belongs to the dUTPase family. Requires Mg(2+) as cofactor.

The enzyme catalyses dUTP + H2O = dUMP + diphosphate + H(+). It participates in pyrimidine metabolism; dUMP biosynthesis; dUMP from dCTP (dUTP route): step 2/2. In terms of biological role, this enzyme is involved in nucleotide metabolism: it produces dUMP, the immediate precursor of thymidine nucleotides and it decreases the intracellular concentration of dUTP so that uracil cannot be incorporated into DNA. In Cereibacter sphaeroides (strain ATCC 17023 / DSM 158 / JCM 6121 / CCUG 31486 / LMG 2827 / NBRC 12203 / NCIMB 8253 / ATH 2.4.1.) (Rhodobacter sphaeroides), this protein is Deoxyuridine 5'-triphosphate nucleotidohydrolase.